The sequence spans 317 residues: 17-beta-hydroxysteroid dehydrogenase type 6 (317 aa).

Positions 1 to 17 (MWFYLVTLVGLYHLLRW) are cleaved as a signal peptide. NAD(+) is bound at residue 33–57 (FITGCDSGFGNLLARQLDRRGMRVL). N71 and N161 each carry an N-linked (GlcNAc...) asparagine glycan. S164 is a binding site for substrate. The active-site Proton acceptor is Y176.

The protein belongs to the short-chain dehydrogenases/reductases (SDR) family. In terms of tissue distribution, detected in liver.

It is found in the microsome membrane. The protein resides in the early endosome membrane. The catalysed reaction is all-trans-retinol--[retinol-binding protein] + NAD(+) = all-trans-retinal--[retinol-binding protein] + NADH + H(+). The enzyme catalyses all-trans-retinol + NAD(+) = all-trans-retinal + NADH + H(+). It carries out the reaction androsterone + NAD(+) = 5alpha-androstan-3,17-dione + NADH + H(+). It catalyses the reaction testosterone + NAD(+) = androst-4-ene-3,17-dione + NADH + H(+). The catalysed reaction is 5alpha-androstane-3alpha,17beta-diol + NAD(+) = 17beta-hydroxy-5alpha-androstan-3-one + NADH + H(+). The enzyme catalyses 17beta-estradiol + NAD(+) = estrone + NADH + H(+). It carries out the reaction 17beta-estradiol + NADP(+) = estrone + NADPH + H(+). It catalyses the reaction 3alpha-hydroxy-5alpha-pregnan-20-one + NAD(+) = 5alpha-pregnane-3,20-dione + NADH + H(+). The catalysed reaction is 5alpha-androstane-3beta,17beta-diol + NAD(+) = 17beta-hydroxy-5alpha-androstan-3-one + NADH + H(+). The enzyme catalyses 3beta-hydroxy-5alpha-androstan-17-one + NAD(+) = 5alpha-androstan-3,17-dione + NADH + H(+). Inhibited by carbenoxolone and phenyl arsenoxide. Functionally, NAD-dependent oxidoreductase with broad substrate specificity that shows both oxidative and reductive activity (in vitro). Has 17-beta-hydroxysteroid dehydrogenase activity towards various steroids (in vitro). Converts 5-alpha-androstan-3-alpha,17-beta-diol to androsterone and estradiol to estrone (in vitro). Has 3-alpha-hydroxysteroid dehydrogenase activity towards androsterone (in vitro). Has retinol dehydrogenase activity towards all-trans-retinol (in vitro). The sequence is that of 17-beta-hydroxysteroid dehydrogenase type 6 (Hsd17b6) from Mus musculus (Mouse).